The chain runs to 607 residues: UvrABC system protein C (607 aa).

The region spanning Gly-16 to Ile-94 is the GIY-YIG domain. The 36-residue stretch at Gln-203–Val-238 folds into the UVR domain.

Belongs to the UvrC family. Interacts with UvrB in an incision complex.

The protein resides in the cytoplasm. Its function is as follows. The UvrABC repair system catalyzes the recognition and processing of DNA lesions. UvrC both incises the 5' and 3' sides of the lesion. The N-terminal half is responsible for the 3' incision and the C-terminal half is responsible for the 5' incision. The polypeptide is UvrABC system protein C (Pseudomonas putida (strain ATCC 700007 / DSM 6899 / JCM 31910 / BCRC 17059 / LMG 24140 / F1)).